An 80-amino-acid polypeptide reads, in one-letter code: Large ribosomal subunit protein bL31 (80 aa).

4 residues coordinate Zn(2+): Cys16, Cys18, Cys38, and Cys41.

This sequence belongs to the bacterial ribosomal protein bL31 family. Type A subfamily. Part of the 50S ribosomal subunit. Zn(2+) serves as cofactor.

In terms of biological role, binds the 23S rRNA. This is Large ribosomal subunit protein bL31 from Rhodococcus jostii (strain RHA1).